We begin with the raw amino-acid sequence, 590 residues long: Arginine--tRNA ligase (590 aa).

A 'HIGH' region motif is present at residues 132 to 142; that stretch reads PNTNKPLHLGH.

The protein belongs to the class-I aminoacyl-tRNA synthetase family. In terms of assembly, monomer.

The protein localises to the cytoplasm. It catalyses the reaction tRNA(Arg) + L-arginine + ATP = L-arginyl-tRNA(Arg) + AMP + diphosphate. The chain is Arginine--tRNA ligase from Treponema denticola (strain ATCC 35405 / DSM 14222 / CIP 103919 / JCM 8153 / KCTC 15104).